We begin with the raw amino-acid sequence, 907 residues long: Collagen alpha-2(I) chain (907 aa).

2 disordered regions span residues 1–183 and 199–907; these read GPMG…GIPG and IPGP…PGPS. The segment covering 19–33 has biased composition (basic and acidic residues); it reads AGEDGHPGKPGRERG. Composition is skewed to low complexity over residues 101–130, 155–169, and 206–221; these read VGAPGPAGARGSDGSVGPVGPAGPIGSAGP, AGPRGEVGIPGVSGP, and PGPVGAAGATGARGIV. Asparagine 260 bears the Deamidated asparagine mark. Residue proline 272 is modified to 4-hydroxyproline. 8 stretches are compositionally biased toward low complexity: residues 272-281, 292-307, 340-362, 424-441, 453-475, 495-507, 535-555, and 566-581; these read PGIRGSRGIP, PPGSRGASGPAGVRGP, PAGIPGIDGRPGPAGPAGARGEP, PGESGAAGPAGPIGSRGP, EPGVVGAPGTAGPSGPSGIPGER, APGAVGAPGPAGA, VGPAGPNGFAGPAGAAGQPGA, and NGPVGPTGPVGSAGPA. Over residues 591–600 the composition is skewed to gly residues; that stretch reads GSRGDGGPPG. Composition is skewed to low complexity over residues 601–611, 664–691, 706–745, 756–766, and 783–804; these read ATGFPGAAGRT, EAGTAGAPGIPGPQGIIGAPGIIGIPGS, EPGPIGIAGPPGARGPPGAVGSPGVNGAPGEAGRDGNPGN, NSGPVGAAGAP, and EPGPVGSVGPAGAVGPRGPSGP. Positions 808-819 are enriched in basic and acidic residues; the sequence is RGDKGEPGDKGP. Pro residues predominate over residues 892 to 907; that stretch reads AGPPGPPGPPGPPGPS.

Belongs to the fibrillar collagen family. Trimers of one alpha 2(I) and two alpha 1(I) chains. Interacts (via C-terminus) with TMEM131 (via PapD-L domain); the interaction is direct and is involved in assembly and TRAPPIII ER-to-Golgi transport complex-dependent secretion of collagen. In terms of processing, prolines at the third position of the tripeptide repeating unit (G-X-Y) are hydroxylated in some or all of the chains. Forms the fibrils of tendon, ligaments and bones. In bones, the fibrils are mineralized with calcium hydroxyapatite.

The protein resides in the secreted. The protein localises to the extracellular space. It is found in the extracellular matrix. In terms of biological role, type I collagen is a member of group I collagen (fibrillar forming collagen). The polypeptide is Collagen alpha-2(I) chain (Macrauchenia sp).